The primary structure comprises 1071 residues: V-type proton ATPase catalytic subunit A (1071 aa).

Ala-2 is subject to N-acetylalanine. A Phosphothreonine modification is found at Thr-131. Residue 257–264 (GAFGCGKT) participates in ATP binding. Positions 494–642 (LLGLWIGDGL…LVSLARSLGL (149 aa)) constitute a DOD-type homing endonuclease domain. 2 positions are modified to phosphoserine: Ser-858 and Ser-928.

This sequence belongs to the ATPase alpha/beta chains family. V-ATPase is a heteromultimeric enzyme composed of a peripheral catalytic V1 complex (components A to H) attached to an integral membrane V0 proton pore complex (components: a, c, c', c'', d, e, f and VOA1). Interacts with RAV1 and RAV2 components of the RAVE complex, which are essential for the stability and assembly of V-ATPase. This protein undergoes a protein self splicing that involves a post-translational excision of the VDE intervening region (intein) followed by peptide ligation.

The protein localises to the vacuole membrane. The enzyme catalyses ATP + H2O + 4 H(+)(in) = ADP + phosphate + 5 H(+)(out). Catalytic subunit of the V1 complex of vacuolar(H+)-ATPase (V-ATPase), a multisubunit enzyme composed of a peripheral complex (V1) that hydrolyzes ATP and a membrane integral complex (V0) that translocates protons. V-ATPase is responsible for acidifying and maintaining the pH of intracellular compartments. Functionally, PI-SceI is an endonuclease that can cleave at a site present in a VMA1 allele that lacks the derived endonuclease segment of the open reading frame; cleavage at this site only occurs during meiosis and initiates 'homing', a genetic event that converts a VMA1 allele lacking VDE into one that contains it. The protein is V-type proton ATPase catalytic subunit A of Saccharomyces cerevisiae (strain ATCC 204508 / S288c) (Baker's yeast).